Consider the following 292-residue polypeptide: NAD kinase (292 aa).

The Proton acceptor role is filled by D72. Residues 72–73, 146–147, H157, R174, D176, and 187–192 each bind NAD(+); these read DG, NE, and TAYSLS.

It belongs to the NAD kinase family. A divalent metal cation is required as a cofactor.

The protein resides in the cytoplasm. The catalysed reaction is NAD(+) + ATP = ADP + NADP(+) + H(+). Functionally, involved in the regulation of the intracellular balance of NAD and NADP, and is a key enzyme in the biosynthesis of NADP. Catalyzes specifically the phosphorylation on 2'-hydroxyl of the adenosine moiety of NAD to yield NADP. In Shewanella woodyi (strain ATCC 51908 / MS32), this protein is NAD kinase.